Consider the following 227-residue polypeptide: Probable septum site-determining protein MinC (227 aa).

The protein belongs to the MinC family. In terms of assembly, interacts with MinD and FtsZ.

Its function is as follows. Cell division inhibitor that blocks the formation of polar Z ring septums. Rapidly oscillates between the poles of the cell to destabilize FtsZ filaments that have formed before they mature into polar Z rings. Prevents FtsZ polymerization. The protein is Probable septum site-determining protein MinC of Clostridioides difficile (strain 630) (Peptoclostridium difficile).